The sequence spans 429 residues: Ribosomal RNA small subunit methyltransferase B (429 aa).

Residues 254-260, D277, D303, and D322 contribute to the S-adenosyl-L-methionine site; that span reads CAAPGGK. The active-site Nucleophile is the C375.

This sequence belongs to the class I-like SAM-binding methyltransferase superfamily. RsmB/NOP family.

The protein localises to the cytoplasm. The catalysed reaction is cytidine(967) in 16S rRNA + S-adenosyl-L-methionine = 5-methylcytidine(967) in 16S rRNA + S-adenosyl-L-homocysteine + H(+). Its function is as follows. Specifically methylates the cytosine at position 967 (m5C967) of 16S rRNA. The protein is Ribosomal RNA small subunit methyltransferase B of Serratia proteamaculans (strain 568).